Reading from the N-terminus, the 224-residue chain is Type II restriction enzyme BstVI (224 aa).

The protein belongs to the XhoI type II restriction endonuclease family.

The catalysed reaction is Endonucleolytic cleavage of DNA to give specific double-stranded fragments with terminal 5'-phosphates.. In terms of biological role, a P subtype restriction enzyme that recognizes the double-stranded sequence 5'-CTCGAG-3' and cleaves after C-1. The protein is Type II restriction enzyme BstVI of Geobacillus stearothermophilus (Bacillus stearothermophilus).